The following is a 204-amino-acid chain: MSAIVLNEKMEKASELALPESFSGINPHNLYLYVKSAQAAMRANSASALTRAEVRGGGKKPWAQKGGGRARAGSRRSPVFVGGGKAFGPKNNRNYDLKVNKKQKKLALNFALNEHAQKGSLFIVDSIEIASGKTKDAATLFKALNQRDTLFVKTVLDEKTYLAFENIASTYVIEENELNAYLAANYRSLVIEKAVWENLVGEAK.

Residues 52-76 are disordered; sequence AEVRGGGKKPWAQKGGGRARAGSRR.

This sequence belongs to the universal ribosomal protein uL4 family. Part of the 50S ribosomal subunit.

Functionally, one of the primary rRNA binding proteins, this protein initially binds near the 5'-end of the 23S rRNA. It is important during the early stages of 50S assembly. It makes multiple contacts with different domains of the 23S rRNA in the assembled 50S subunit and ribosome. Forms part of the polypeptide exit tunnel. This is Large ribosomal subunit protein uL4 from Sulfurimonas denitrificans (strain ATCC 33889 / DSM 1251) (Thiomicrospira denitrificans (strain ATCC 33889 / DSM 1251)).